Reading from the N-terminus, the 245-residue chain is Pyridoxine 5'-phosphate synthase (245 aa).

A 3-amino-2-oxopropyl phosphate-binding site is contributed by N9. 11 to 12 (DH) contributes to the 1-deoxy-D-xylulose 5-phosphate binding site. R20 contributes to the 3-amino-2-oxopropyl phosphate binding site. The active-site Proton acceptor is H45. R47 and H52 together coordinate 1-deoxy-D-xylulose 5-phosphate. E72 functions as the Proton acceptor in the catalytic mechanism. A 1-deoxy-D-xylulose 5-phosphate-binding site is contributed by T102. H193 (proton donor) is an active-site residue. 3-amino-2-oxopropyl phosphate-binding positions include G194 and 215–216 (GH).

Belongs to the PNP synthase family. In terms of assembly, homooctamer; tetramer of dimers.

The protein localises to the cytoplasm. The enzyme catalyses 3-amino-2-oxopropyl phosphate + 1-deoxy-D-xylulose 5-phosphate = pyridoxine 5'-phosphate + phosphate + 2 H2O + H(+). It functions in the pathway cofactor biosynthesis; pyridoxine 5'-phosphate biosynthesis; pyridoxine 5'-phosphate from D-erythrose 4-phosphate: step 5/5. Its function is as follows. Catalyzes the complicated ring closure reaction between the two acyclic compounds 1-deoxy-D-xylulose-5-phosphate (DXP) and 3-amino-2-oxopropyl phosphate (1-amino-acetone-3-phosphate or AAP) to form pyridoxine 5'-phosphate (PNP) and inorganic phosphate. The chain is Pyridoxine 5'-phosphate synthase from Shewanella oneidensis (strain ATCC 700550 / JCM 31522 / CIP 106686 / LMG 19005 / NCIMB 14063 / MR-1).